The following is a 333-amino-acid chain: Adenosine deaminase (333 aa).

Residues H12 and H14 each contribute to the Zn(2+) site. Residues H14, D16, and G170 each contribute to the substrate site. H197 contacts Zn(2+). E200 functions as the Proton donor in the catalytic mechanism. D278 contributes to the Zn(2+) binding site. D279 contacts substrate.

Belongs to the metallo-dependent hydrolases superfamily. Adenosine and AMP deaminases family. Adenosine deaminase subfamily. The cofactor is Zn(2+).

It carries out the reaction adenosine + H2O + H(+) = inosine + NH4(+). It catalyses the reaction 2'-deoxyadenosine + H2O + H(+) = 2'-deoxyinosine + NH4(+). Its function is as follows. Catalyzes the hydrolytic deamination of adenosine and 2-deoxyadenosine. The polypeptide is Adenosine deaminase (Klebsiella pneumoniae subsp. pneumoniae (strain ATCC 700721 / MGH 78578)).